The chain runs to 95 residues: Glutamyl-tRNA(Gln) amidotransferase subunit C (95 aa).

Belongs to the GatC family. In terms of assembly, heterotrimer of A, B and C subunits.

It carries out the reaction L-glutamyl-tRNA(Gln) + L-glutamine + ATP + H2O = L-glutaminyl-tRNA(Gln) + L-glutamate + ADP + phosphate + H(+). The enzyme catalyses L-aspartyl-tRNA(Asn) + L-glutamine + ATP + H2O = L-asparaginyl-tRNA(Asn) + L-glutamate + ADP + phosphate + 2 H(+). Allows the formation of correctly charged Asn-tRNA(Asn) or Gln-tRNA(Gln) through the transamidation of misacylated Asp-tRNA(Asn) or Glu-tRNA(Gln) in organisms which lack either or both of asparaginyl-tRNA or glutaminyl-tRNA synthetases. The reaction takes place in the presence of glutamine and ATP through an activated phospho-Asp-tRNA(Asn) or phospho-Glu-tRNA(Gln). This is Glutamyl-tRNA(Gln) amidotransferase subunit C from Moraxella catarrhalis (Branhamella catarrhalis).